Reading from the N-terminus, the 178-residue chain is Large ribosomal subunit protein bL25 (178 aa).

This sequence belongs to the bacterial ribosomal protein bL25 family. CTC subfamily. Part of the 50S ribosomal subunit; part of the 5S rRNA/L5/L18/L25 subcomplex. Contacts the 5S rRNA. Binds to the 5S rRNA independently of L5 and L18.

This is one of the proteins that binds to the 5S RNA in the ribosome where it forms part of the central protuberance. The polypeptide is Large ribosomal subunit protein bL25 (Helicobacter pylori (strain P12)).